The sequence spans 377 residues: Chorismate synthase (377 aa).

Residues arginine 48 and arginine 54 each contribute to the NADP(+) site. FMN contacts are provided by residues 125 to 127 (RSS), 238 to 239 (NA), glycine 278, 293 to 297 (KPTSS), and arginine 319.

The protein belongs to the chorismate synthase family. Homotetramer. FMNH2 is required as a cofactor.

The catalysed reaction is 5-O-(1-carboxyvinyl)-3-phosphoshikimate = chorismate + phosphate. Its pathway is metabolic intermediate biosynthesis; chorismate biosynthesis; chorismate from D-erythrose 4-phosphate and phosphoenolpyruvate: step 7/7. Catalyzes the anti-1,4-elimination of the C-3 phosphate and the C-6 proR hydrogen from 5-enolpyruvylshikimate-3-phosphate (EPSP) to yield chorismate, which is the branch point compound that serves as the starting substrate for the three terminal pathways of aromatic amino acid biosynthesis. This reaction introduces a second double bond into the aromatic ring system. The polypeptide is Chorismate synthase (Aromatoleum aromaticum (strain DSM 19018 / LMG 30748 / EbN1) (Azoarcus sp. (strain EbN1))).